A 1515-amino-acid polypeptide reads, in one-letter code: Homeobox protein cut-like 1 (1515 aa).

Positions 56–361 (LLKSFQGEID…VKKELNTLKS (306 aa)) form a coiled coil. A compositionally biased stretch (polar residues) spans 393-405 (ENATLRISNSDLS). Disordered regions lie at residues 393–453 (ENAT…SPAG), 509–546 (PYSTNSISSPSPLQQSPDVNGMAPSPSQSESAGSISEG), 644–666 (PKRRNRSEGNITTRIRASETGSD), and 680–702 (LQVQKTAEPVQTSSTSSSGNSDD). Positions 422-432 (GPLPASPPPQL) are enriched in pro residues. Ser-427 is subject to Phosphoserine. Residues 436–447 (TGEQVSNTNGTH) are compositionally biased toward polar residues. Residues 514 to 544 (SISSPSPLQQSPDVNGMAPSPSQSESAGSIS) show a composition bias toward low complexity. The segment at residues 540–627 (AGSISEGEEI…ILALRSIQGR (88 aa)) is a DNA-binding region (CUT 1). Residue Ser-761 is modified to Phosphoserine. Disordered stretches follow at residues 769 to 871 (PETS…SASA) and 884 to 923 (YSQSSELSLTGASRSETPQNSPLPSSPIVPMAKPAKPSVP). Glycyl lysine isopeptide (Lys-Gly) (interchain with G-Cter in SUMO2) cross-links involve residues Lys-783, Lys-809, and Lys-840. Over residues 828–852 (PERRNLTSSEETKADETTASGKERA) the composition is skewed to basic and acidic residues. Polar residues-rich tracts occupy residues 853 to 868 (GSSQPRAERSQLQGPS) and 884 to 906 (YSQSSELSLTGASRSETPQNSPL). A Phosphoserine modification is found at Ser-904. The CUT 2 DNA-binding region spans 929–1016 (QYEVYMYQEV…QGVLPVQGQQ (88 aa)). Positions 1032–1044 (QQGCVSSESTPKT) are enriched in polar residues. A disordered region spans residues 1032–1105 (QQGCVSSEST…QPTTPLPLSG (74 aa)). The segment covering 1045 to 1061 (SASCSPAPESPMSSSES) has biased composition (low complexity). A phosphoserine mark is found at Ser-1054 and Ser-1064. A DNA-binding region (CUT 3) is located at residues 1112–1199 (QELVAMSPEL…VEKLMDMKRM (88 aa)). The disordered stretch occupies residues 1207–1242 (RRHSSVSDSQPCEPPSVGIDYSQGASPQPQHQLKKP). Positions 1239-1298 (LKKPRVVLAPEEKEALKRAYQQKPYPSPKTIEELATQLNLKTSTVINWFHNYRSRIRREL) form a DNA-binding region, homeobox. A Phosphoserine modification is found at Ser-1265. Lys-1279 is covalently cross-linked (Glycyl lysine isopeptide (Lys-Gly) (interchain with G-Cter in SUMO2)). The disordered stretch occupies residues 1307–1488 (SQGQAGASDS…AGARDNPVRK (182 aa)). Residues 1313-1328 (ASDSPSARSSRAAPSS) show a composition bias toward low complexity. Positions 1331–1343 (DSCDGVEATDAEE) are enriched in acidic residues. Ser-1332 is subject to Phosphoserine. Residues 1365-1378 (ADREEATQPAEKAK) are compositionally biased toward basic and acidic residues. Residues 1406-1468 (ADAPAPVPSL…ANAPARRPSS (63 aa)) are compositionally biased toward low complexity. 3 positions are modified to phosphoserine: Ser-1468, Ser-1496, and Ser-1506.

It belongs to the CUT homeobox family. As to quaternary structure, interacts with BANP. Interacts with SATB1 (via DNA-binding domains); the interaction inhibits the attachment of both proteins to DNA. Post-translationally, phosphorylated by PKA. As cells progress into S phase, a fraction of CUX1 molecules is proteolytically processed into N-terminally truncated proteins of 110 kDa by CTSL. Cell cycle-dependent processing of CUX1 serves to generate a CDP/Cux p110 with distinct DNA binding and transcriptional properties. As to expression, testis-specific where it is expressed in germ cells.

The protein localises to the nucleus. In terms of biological role, transcription factor involved in the control of neuronal differentiation in the brain. Regulates dendrite development and branching, and dendritic spine formation in cortical layers II-III. Also involved in the control of synaptogenesis. In addition, it has probably a broad role in mammalian development as a repressor of developmentally regulated gene expression. May act by preventing binding of positively-activing CCAAT factors to promoters. Component of nf-munr repressor; binds to the matrix attachment regions (MARs) (5' and 3') of the immunoglobulin heavy chain enhancer. Represses T-cell receptor (TCR) beta enhancer function by binding to MARbeta, an ATC-rich DNA sequence located upstream of the TCR beta enhancer. Binds to the TH enhancer; may require the basic helix-loop-helix protein TCF4 as a coactivator. Its function is as follows. Plays a role in cell cycle progression, in particular at the G1/S transition. As cells progress into S phase, a fraction of CUX1 molecules is proteolytically processed into N-terminally truncated proteins of 110 kDa. While CUX1 only transiently binds to DNA and carries the CCAAT-displacement activity, CDP/Cux p110 makes a stable interaction with DNA and stimulates expression of genes such as POLA1. This Mus musculus (Mouse) protein is Homeobox protein cut-like 1.